A 431-amino-acid chain; its full sequence is MGKRLDQPQMYPQYTYYCPQYLQTKQSYAPAPHPMAPPSPSTNSSSNSSGEQLSKTNLYIRGLPPGTTDQDLIKLCQPYGKIVSTKAILDKNTNQCKGYGFVDFDSPAAAQKAVASLKANGVQAQMAKQQEQDPTNLYISNLPISMDEQELENMLKPFGHVISTRILRDANGVSRGVGFARMESTEKCEVVIQHFNGKYLKTPPGIPAPSEPLLCKFADGGQKKRQGQSKHTQNGRPWPREGEAGMALTYDPTAALQNGFYSSPYSLATNRMIPQTSITPFIAASPVSTYQVQSTSWTPHLPYIMQPTGAVITPAVDHPMSMQPTNIVGPLTQQMNHLSLGTAGTIQSQDRIMVLHQLLCQYMTAAPMQGTYIPQYTPVPPTAVSIEGVVADTSPQTVAPSSQDSSGQQQQLAVDTPSEHAPAYSFQQSKP.

The segment at 28–53 (YAPAPHPMAPPSPSTNSSSNSSGEQL) is disordered. The segment covering 31–40 (APHPMAPPSP) has biased composition (pro residues). RRM domains lie at 56-129 (TNLY…MAKQ) and 135-220 (TNLY…FADG). 2 disordered regions span residues 220–242 (GGQK…PREG) and 393–431 (TSPQ…QSKP). Over residues 401-411 (SSQDSSGQQQQ) the composition is skewed to low complexity.

It localises to the cytoplasm. Functionally, binds poly(A) and poly(U) oligoribonucleotides. This chain is RNA-binding motif, single-stranded-interacting protein 3 (Rbms3), found in Mus musculus (Mouse).